The sequence spans 256 residues: Trans-aconitate 2-methyltransferase (256 aa).

The protein belongs to the methyltransferase superfamily. Tam family.

It is found in the cytoplasm. It catalyses the reaction trans-aconitate + S-adenosyl-L-methionine = (E)-3-(methoxycarbonyl)pent-2-enedioate + S-adenosyl-L-homocysteine. Its function is as follows. Catalyzes the S-adenosylmethionine monomethyl esterification of trans-aconitate. This Rhizobium rhizogenes (strain K84 / ATCC BAA-868) (Agrobacterium radiobacter) protein is Trans-aconitate 2-methyltransferase.